We begin with the raw amino-acid sequence, 420 residues long: MKLFVHLVLFISLFIPYFTKAALYVDIKKSSVGNIGLVVSKCTCKTALESELSENIAKVIGTNLSNCGLFNVKRGAEAESKSWKSDTVVTVSLSEISGSALELSFRLFDTFTKRELLTQSVVFPAKDWRKIGHLVSDVIHDRLIGEKGHFNTKITYIAEEKDSNYKSVRKIAVMNQDGSNIKYLTNGDRFVSTPRFSPNGKGIVYISYANGKSYIILKNLKDNTESIISTFEGVVSAPRFSPDGKSLLISHSLGGETNILSLDLSSKRTKKITKGSAISTSPSFSPDQKYMAFSSDISGSQQLYVIDFTNKSKKPKRISFGSGRYATPVWSPKGDLIAFTKIQSGKFYIGVMKPDGKEERLLSEGHKIESPAWLPNGREIIFTRTESPSNSKLYLVDLVKKNQKMVSTPTNASLPDWSYF.

The N-terminal stretch at 1-21 (MKLFVHLVLFISLFIPYFTKA) is a signal peptide.

This sequence belongs to the TolB family. The Tol-Pal system is composed of five core proteins: the inner membrane proteins TolA, TolQ and TolR, the periplasmic protein TolB and the outer membrane protein Pal. They form a network linking the inner and outer membranes and the peptidoglycan layer.

It is found in the periplasm. Its function is as follows. Part of the Tol-Pal system, which plays a role in outer membrane invagination during cell division and is important for maintaining outer membrane integrity. In Wolbachia sp. subsp. Drosophila simulans (strain wRi), this protein is Tol-Pal system protein TolB.